The primary structure comprises 822 residues: ATP-dependent zinc metalloprotease FTSH 7, chloroplastic (822 aa).

Composition is skewed to low complexity over residues 1-34 (MASA…RRAS), 80-94 (AEAS…SSSG), and 101-122 (AAAA…AAAT). Disordered stretches follow at residues 1–44 (MASA…ASVR) and 67–136 (PAAR…ENKW). Residues 1 to 70 (MASASAAAET…RVLRRPPAAR (70 aa)) constitute a chloroplast transit peptide. Transmembrane regions (helical) follow at residues 154–174 (IVQG…IFAL) and 288–308 (GGLL…AVVL). Position 386–393 (386–393 (GLPGTGKT)) interacts with ATP. Residue histidine 611 participates in Zn(2+) binding. Glutamate 612 is an active-site residue. The Zn(2+) site is built by histidine 615 and aspartate 694.

It in the N-terminal section; belongs to the AAA ATPase family. In the C-terminal section; belongs to the peptidase M41 family. Requires Zn(2+) as cofactor.

The protein localises to the plastid. It localises to the chloroplast thylakoid membrane. Probable ATP-dependent zinc metallopeptidase. This chain is ATP-dependent zinc metalloprotease FTSH 7, chloroplastic (FTSH7), found in Oryza sativa subsp. japonica (Rice).